Reading from the N-terminus, the 476-residue chain is MGIKFLEVIKPFCAVLPEIQKPERKIQFREKVLWTAITLFIFLVCCQIPLFGIMSSDSADPFYWMRVILASNRGTLMELGISPIVTSGLIMQLLAGAKIIEVGDTPKDRALFNGAQKLFGMIITIGQAIVYVMTGMYGDPAEMGAGICLLIIIQLFVAGLIVLLLDELLQKGYGLGSGISLFIATNICETIVWKAFSPTTINTGRGTEFEGAVIALFHLLATRTDKVRALREAFYRQNLPNLMNLIATVFVFAVVIYFQGFRVDLPIKSARYRGQYSSYPIKLFYTSNIPIILQSALVSNLYVISQMLSVRFSGNFLVNLLGQWADVSGGGPARSYPVGGLCYYLSPPESMGAIFEDPVHVVVYIIFMLGSCAFFSKTWIEVSGSSAKDVAKQLKEQQMVMRGHRDTSMVHELNRYIPTAAAFGGLCIGALSVLADFLGAIGSGTGILLAVTIIYQYFEIFVKEQAEVGGMGALFF.

Over 1–33 the chain is Cytoplasmic; it reads MGIKFLEVIKPFCAVLPEIQKPERKIQFREKVL. The helical transmembrane segment at 34–53 threads the bilayer; that stretch reads WTAITLFIFLVCCQIPLFGI. Residues 54–76 lie on the Lumenal side of the membrane; that stretch reads MSSDSADPFYWMRVILASNRGTL. Residues 77-96 form a helical membrane-spanning segment; that stretch reads MELGISPIVTSGLIMQLLAG. Residues 97–117 are Cytoplasmic-facing; the sequence is AKIIEVGDTPKDRALFNGAQK. A helical membrane pass occupies residues 118 to 138; that stretch reads LFGMIITIGQAIVYVMTGMYG. The Lumenal portion of the chain corresponds to 139 to 144; the sequence is DPAEMG. Residues 145 to 165 traverse the membrane as a helical segment; that stretch reads AGICLLIIIQLFVAGLIVLLL. Over 166-172 the chain is Cytoplasmic; that stretch reads DELLQKG. A helical transmembrane segment spans residues 173–193; that stretch reads YGLGSGISLFIATNICETIVW. At 194-240 the chain is on the lumenal side; sequence KAFSPTTINTGRGTEFEGAVIALFHLLATRTDKVRALREAFYRQNLP. Residues 241–261 form a helical membrane-spanning segment; the sequence is NLMNLIATVFVFAVVIYFQGF. Over 262–288 the chain is Cytoplasmic; it reads RVDLPIKSARYRGQYSSYPIKLFYTSN. A helical transmembrane segment spans residues 289–309; that stretch reads IPIILQSALVSNLYVISQMLS. Residues 310–354 are Lumenal-facing; the sequence is VRFSGNFLVNLLGQWADVSGGGPARSYPVGGLCYYLSPPESMGAI. A helical membrane pass occupies residues 355–375; sequence FEDPVHVVVYIIFMLGSCAFF. Topologically, residues 376-420 are cytoplasmic; that stretch reads SKTWIEVSGSSAKDVAKQLKEQQMVMRGHRDTSMVHELNRYIPTA. A helical transmembrane segment spans residues 421–441; the sequence is AAFGGLCIGALSVLADFLGAI. Over 442 to 445 the chain is Lumenal; it reads GSGT. The chain crosses the membrane as a helical span at residues 446–462; the sequence is GILLAVTIIYQYFEIFV. The Cytoplasmic segment spans residues 463–476; it reads KEQAEVGGMGALFF.

This sequence belongs to the SecY/SEC61-alpha family. The SEC61 channel-forming translocon complex consists of channel-forming core components SEC61A1, SEC61B and SEC61G and different auxiliary components such as SEC62 and SEC63.

It is found in the endoplasmic reticulum membrane. Functionally, component of SEC61 channel-forming translocon complex that mediates transport of signal peptide-containing precursor polypeptides across the endoplasmic reticulum (ER). Forms a ribosome receptor and a gated pore in the ER membrane, both functions required for cotranslational translocation of nascent polypeptides. This chain is Protein transport protein Sec61 subunit alpha isoform 2 (SEC61A2), found in Homo sapiens (Human).